The following is a 49-amino-acid chain: Large ribosomal subunit protein bL33 (49 aa).

Belongs to the bacterial ribosomal protein bL33 family.

The sequence is that of Large ribosomal subunit protein bL33 from Finegoldia magna (strain ATCC 29328 / DSM 20472 / WAL 2508) (Peptostreptococcus magnus).